The following is a 269-amino-acid chain: Tryptophan synthase alpha chain (269 aa).

Catalysis depends on proton acceptor residues glutamate 49 and aspartate 60.

It belongs to the TrpA family. Tetramer of two alpha and two beta chains.

The enzyme catalyses (1S,2R)-1-C-(indol-3-yl)glycerol 3-phosphate + L-serine = D-glyceraldehyde 3-phosphate + L-tryptophan + H2O. It participates in amino-acid biosynthesis; L-tryptophan biosynthesis; L-tryptophan from chorismate: step 5/5. Its function is as follows. The alpha subunit is responsible for the aldol cleavage of indoleglycerol phosphate to indole and glyceraldehyde 3-phosphate. The sequence is that of Tryptophan synthase alpha chain from Azotobacter vinelandii (strain DJ / ATCC BAA-1303).